The chain runs to 283 residues: MSKFLSQAALNTLRNTRLGSRQLVRSFAGIASTRNHREPAHQEPGCGQALGRGLLQMRLPVAGRRSMFIQTQDTPNPDSLKFLPGVDVLGKGNTYDFPNGTTAHSSPLAKLLFRVEGVKGVFFGADFVTISKQEGAEWSLIKPEVFAVIMDFFASGLPVLHDAQPNADTEILEDDDETVMMIKELLDTRIRPTVQEDGGDIVFMGYEAGVVKLKMQGSCSSCPSSIVTLKNGVQNMLQFYIPEVESVEQVFDEADRMIDSEFERFEKNLKTLKQQEPSGAGPH.

Residues 1-30 (MSKFLSQAALNTLRNTRLGSRQLVRSFAGI) constitute a mitochondrion transit peptide. A nifU region spans residues 182–250 (IKELLDTRIR…IPEVESVEQV (69 aa)). Residues C219 and C222 each coordinate [4Fe-4S] cluster.

Belongs to the NifU family.

Its subcellular location is the mitochondrion. Functionally, molecular scaffold for [Fe-S] cluster assembly of mitochondrial iron-sulfur proteins. In Drosophila erecta (Fruit fly), this protein is NFU1 iron-sulfur cluster scaffold homolog, mitochondrial.